The following is a 451-amino-acid chain: UDP-N-acetylmuramoylalanine--D-glutamate ligase (451 aa).

120–126 is a binding site for ATP; the sequence is GSNGKTT.

Belongs to the MurCDEF family.

It is found in the cytoplasm. It carries out the reaction UDP-N-acetyl-alpha-D-muramoyl-L-alanine + D-glutamate + ATP = UDP-N-acetyl-alpha-D-muramoyl-L-alanyl-D-glutamate + ADP + phosphate + H(+). Its pathway is cell wall biogenesis; peptidoglycan biosynthesis. Its function is as follows. Cell wall formation. Catalyzes the addition of glutamate to the nucleotide precursor UDP-N-acetylmuramoyl-L-alanine (UMA). The chain is UDP-N-acetylmuramoylalanine--D-glutamate ligase from Bacillus pumilus (strain SAFR-032).